The sequence spans 184 residues: Large ribosomal subunit protein uL5 (184 aa).

This sequence belongs to the universal ribosomal protein uL5 family. As to quaternary structure, part of the 50S ribosomal subunit; part of the 5S rRNA/L5/L18/L25 subcomplex. Contacts the 5S rRNA and the P site tRNA. Forms a bridge to the 30S subunit in the 70S ribosome.

In terms of biological role, this is one of the proteins that bind and probably mediate the attachment of the 5S RNA into the large ribosomal subunit, where it forms part of the central protuberance. In the 70S ribosome it contacts protein S13 of the 30S subunit (bridge B1b), connecting the 2 subunits; this bridge is implicated in subunit movement. Contacts the P site tRNA; the 5S rRNA and some of its associated proteins might help stabilize positioning of ribosome-bound tRNAs. In Thermotoga sp. (strain RQ2), this protein is Large ribosomal subunit protein uL5.